Here is a 115-residue protein sequence, read N- to C-terminus: DNA-binding protein PYRAB09250 (115 aa).

Belongs to the PDCD5 family.

This is DNA-binding protein PYRAB09250 from Pyrococcus abyssi (strain GE5 / Orsay).